We begin with the raw amino-acid sequence, 71 residues long: MAVFKVFYQHNKEEVIVREHTQTIYVEAQTEEQVRRYLKDRNFNIEFIAKLEGAHLEYEKQSDHFNVEQAE.

It belongs to the RNA polymerase subunit epsilon family. As to quaternary structure, RNAP is composed of a core of 2 alpha, a beta and a beta' subunit. The core is associated with a delta subunit, and at least one of epsilon or omega. When a sigma factor is associated with the core the holoenzyme is formed, which can initiate transcription.

It carries out the reaction RNA(n) + a ribonucleoside 5'-triphosphate = RNA(n+1) + diphosphate. Functionally, a non-essential component of RNA polymerase (RNAP). The protein is DNA-directed RNA polymerase subunit epsilon of Staphylococcus saprophyticus subsp. saprophyticus (strain ATCC 15305 / DSM 20229 / NCIMB 8711 / NCTC 7292 / S-41).